A 352-amino-acid polypeptide reads, in one-letter code: Biotin synthase (352 aa).

Residues Asn44 to Lys262 enclose the Radical SAM core domain. [4Fe-4S] cluster contacts are provided by Cys59, Cys63, and Cys66. [2Fe-2S] cluster is bound by residues Cys103, Cys134, Cys194, and Arg266.

The protein belongs to the radical SAM superfamily. Biotin synthase family. In terms of assembly, homodimer. The cofactor is [4Fe-4S] cluster. [2Fe-2S] cluster serves as cofactor.

It catalyses the reaction (4R,5S)-dethiobiotin + (sulfur carrier)-SH + 2 reduced [2Fe-2S]-[ferredoxin] + 2 S-adenosyl-L-methionine = (sulfur carrier)-H + biotin + 2 5'-deoxyadenosine + 2 L-methionine + 2 oxidized [2Fe-2S]-[ferredoxin]. It participates in cofactor biosynthesis; biotin biosynthesis; biotin from 7,8-diaminononanoate: step 2/2. Functionally, catalyzes the conversion of dethiobiotin (DTB) to biotin by the insertion of a sulfur atom into dethiobiotin via a radical-based mechanism. The chain is Biotin synthase from Pseudomonas putida (strain GB-1).